The sequence spans 202 residues: LexA repressor (202 aa).

The segment at residues 28-48 (IAEIARAIGVSSPHGVREQLR) is a DNA-binding region (H-T-H motif). Active-site for autocatalytic cleavage activity residues include Ser120 and Lys157.

Belongs to the peptidase S24 family. In terms of assembly, homodimer.

The catalysed reaction is Hydrolysis of Ala-|-Gly bond in repressor LexA.. Represses a number of genes involved in the response to DNA damage (SOS response), including recA and lexA. In the presence of single-stranded DNA, RecA interacts with LexA causing an autocatalytic cleavage which disrupts the DNA-binding part of LexA, leading to derepression of the SOS regulon and eventually DNA repair. The chain is LexA repressor from Methylococcus capsulatus (strain ATCC 33009 / NCIMB 11132 / Bath).